The primary structure comprises 134 residues: MVTLFLSPSCTSCRKARAWLVKHEVDFQEHNIITSPLSRDELMSILSFTENGTEDIISTRSKVFQKLDIDVEELSISDLIDLIAKNPSLLRRPIIMDQKRMQIGFNEDEIRAFLSRDYRKQELRQATIKAEIEG.

Cysteines 10 and 13 form a disulfide.

This sequence belongs to the ArsC family. Spx subfamily. In terms of assembly, interacts with the C-terminal domain of the alpha subunit of the RNAP.

The protein localises to the cytoplasm. Functionally, global transcriptional regulator that plays a key role in stress response and exerts either positive or negative regulation of genes. Acts by interacting with the C-terminal domain of the alpha subunit of the RNA polymerase (RNAP). This interaction can enhance binding of RNAP to the promoter region of target genes and stimulate their transcription, or block interaction of RNAP with activator. This is Global transcriptional regulator Spx from Streptococcus pyogenes serotype M1.